We begin with the raw amino-acid sequence, 310 residues long: tRNA dimethylallyltransferase (310 aa).

10-17 provides a ligand contact to ATP; it reads GPTAVGKS. 12-17 is a binding site for substrate; that stretch reads TAVGKS. Interaction with substrate tRNA stretches follow at residues 35–38, 159–163, and 274–281; these read DSAQ, QRIQR, and KRQITWLR.

This sequence belongs to the IPP transferase family. Monomer. Mg(2+) serves as cofactor.

The enzyme catalyses adenosine(37) in tRNA + dimethylallyl diphosphate = N(6)-dimethylallyladenosine(37) in tRNA + diphosphate. Functionally, catalyzes the transfer of a dimethylallyl group onto the adenine at position 37 in tRNAs that read codons beginning with uridine, leading to the formation of N6-(dimethylallyl)adenosine (i(6)A). The protein is tRNA dimethylallyltransferase of Halorhodospira halophila (strain DSM 244 / SL1) (Ectothiorhodospira halophila (strain DSM 244 / SL1)).